The sequence spans 244 residues: NAD(P)H-quinone oxidoreductase subunit K (244 aa).

Positions 60, 61, 125, and 156 each coordinate [4Fe-4S] cluster.

Belongs to the complex I 20 kDa subunit family. NDH-1 can be composed of about 15 different subunits; different subcomplexes with different compositions have been identified which probably have different functions. [4Fe-4S] cluster serves as cofactor.

It localises to the cellular thylakoid membrane. It catalyses the reaction a plastoquinone + NADH + (n+1) H(+)(in) = a plastoquinol + NAD(+) + n H(+)(out). The enzyme catalyses a plastoquinone + NADPH + (n+1) H(+)(in) = a plastoquinol + NADP(+) + n H(+)(out). Functionally, NDH-1 shuttles electrons from an unknown electron donor, via FMN and iron-sulfur (Fe-S) centers, to quinones in the respiratory and/or the photosynthetic chain. The immediate electron acceptor for the enzyme in this species is believed to be plastoquinone. Couples the redox reaction to proton translocation, and thus conserves the redox energy in a proton gradient. Cyanobacterial NDH-1 also plays a role in inorganic carbon-concentration. This Synechococcus sp. (strain CC9902) protein is NAD(P)H-quinone oxidoreductase subunit K.